The chain runs to 612 residues: MRDIRELLLVLFTSCLALGSVPSSFDGDRYCRCQPGEACWPSLADWQALNMSIQGTLVEVRPIGHVCHEPTYNKADCERVSKLSSNGTWRASQPGAQQEHAWEVSLSRNESCYVGPANPAEPCGQGRIPRYSAMVETTEQAQKAIRFARERRLRLVIKNTGHDSGGRSSAVDSFQILTQRLKDISFIEEFTPTLAETRGPSVRIGAGVLTKELYAVADEHGYTAMGGECATVGVAGGYIQGGGVSTALTPMMGLAADLVQEFEVISAEGSLVIANEFQNQDLFWALRGGGGGTVGLVTSITMPVFGAIPANISELSFESQQPDEAFWTAVKEMIYVTRDITTGGNSGQYWVGRGPTGSYFVRQTLFFLGETDIEPADKMGSLLRVLQDQEIAFRFNVTAYPRLSSFLAIPQGEFVGGIAFHQENILIPQGFYDSPEGPAQLVDRLAEVKLNPGDMWVANTLGGQVMANKDVDNAMHSGWRTASVLLVGNRIFEPALKSQLDVQERLTAVEGPLLHSIGQPAPEAIYLNEADADLENWQDWFWGEKYARLRDIKSKWDPDDLFLVRHGVGSEDWDEDGMCRMQLSPQECPVREHSRCTCKFFECAMLHVPGLL.

The N-terminal stretch at M1–G19 is a signal peptide. N50, N86, and N109 each carry an N-linked (GlcNAc...) asparagine glycan. Positions G124–A307 constitute an FAD-binding PCMH-type domain. 2 N-linked (GlcNAc...) asparagine glycosylation sites follow: N311 and N396.

This sequence belongs to the oxygen-dependent FAD-linked oxidoreductase family. The cofactor is FAD.

Its pathway is alkaloid biosynthesis. In terms of biological role, FAD-linked oxidoreductase; part of the gene cluster that mediates the biosynthesis of notoamide, a fungal indole alkaloid that belongs to a family of natural products containing a characteristic bicyclo[2.2.2]diazaoctane core. The first step of notoamide biosynthesis involves coupling of L-proline and L-tryptophan by the bimodular NRPS notE', to produce cyclo-L-tryptophan-L-proline called brevianamide F. The reverse prenyltransferase notF' then acts as a deoxybrevianamide E synthase and converts brevianamide F to deoxybrevianamide E via reverse prenylation at C-2 of the indole ring leading to the bicyclo[2.2.2]diazaoctane core. Deoxybrevianamide E is further hydroxylated at C-6 of the indole ring, likely catalyzed by the cytochrome P450 monooxygenase notG', to yield 6-hydroxy-deoxybrevianamide E. 6-hydroxy-deoxybrevianamide E is a specific substrate of the prenyltransferase notC' for normal prenylation at C-7 to produce 6-hydroxy-7-prenyl-deoxybrevianamide, also called notoamide S. As the proposed pivotal branching point in notoamide biosynthesis, notoamide S can be diverted to notoamide E through an oxidative pyran ring closure putatively catalyzed by either notH' cytochrome P450 monooxygenase or the notD' FAD-linked oxidoreductase. This step would be followed by an indole 2,3-epoxidation-initiated pinacol-like rearrangement catalyzed by the notB' FAD-dependent monooxygenase leading to the formation of notoamide C and notoamide D. On the other hand notoamide S is converted to notoamide T by notH' (or notD'), a bifunctional oxidase that also functions as the intramolecular Diels-Alderase responsible for generation of (-)-notoamide T. To generate antipodal (+)-notoaminide T, notH (or notD) in Aspergillus strain MF297-2 is expected to catalyze a Diels-Alder reaction leading to the opposite stereochemistry. The remaining oxidoreductase notD' (or notH') likely catalyzes the oxidative pyran ring formation to yield (-)-stephacidin A. The FAD-dependent monooxygenase notI' is highly similar to notB' and is predicted to catalyze a similar conversion from (-)-stephacidin A to (+)-notoamide B via the 2,3-epoxidation of (-)-stephacidin A followed by a pinacol-type rearrangement. Finally, it remains unclear which enzyme could be responsible for the final hydroxylation steps leading to notoamide A and sclerotiamide. This chain is FAD-linked oxidoreductase notD', found in Aspergillus versicolor.